The following is a 309-amino-acid chain: tRNA dimethylallyltransferase (309 aa).

Residue Gly-9–Thr-16 coordinates ATP. Thr-11 to Thr-16 provides a ligand contact to substrate. Residues Asp-34 to Gln-37 form an interaction with substrate tRNA region.

It belongs to the IPP transferase family. Monomer. Mg(2+) is required as a cofactor.

It catalyses the reaction adenosine(37) in tRNA + dimethylallyl diphosphate = N(6)-dimethylallyladenosine(37) in tRNA + diphosphate. In terms of biological role, catalyzes the transfer of a dimethylallyl group onto the adenine at position 37 in tRNAs that read codons beginning with uridine, leading to the formation of N6-(dimethylallyl)adenosine (i(6)A). The protein is tRNA dimethylallyltransferase of Enterococcus faecalis (strain ATCC 700802 / V583).